A 219-amino-acid chain; its full sequence is Large ribosomal subunit protein uL3 (219 aa).

N5-methylglutamine is present on Gln151.

The protein belongs to the universal ribosomal protein uL3 family. As to quaternary structure, part of the 50S ribosomal subunit. Forms a cluster with proteins L14 and L19. Post-translationally, methylated by PrmB.

In terms of biological role, one of the primary rRNA binding proteins, it binds directly near the 3'-end of the 23S rRNA, where it nucleates assembly of the 50S subunit. This Blochmanniella floridana protein is Large ribosomal subunit protein uL3.